A 143-amino-acid chain; its full sequence is Large ribosomal subunit protein uL13 (143 aa).

This sequence belongs to the universal ribosomal protein uL13 family. As to quaternary structure, part of the 50S ribosomal subunit.

Functionally, this protein is one of the early assembly proteins of the 50S ribosomal subunit, although it is not seen to bind rRNA by itself. It is important during the early stages of 50S assembly. The sequence is that of Large ribosomal subunit protein uL13 from Methylacidiphilum infernorum (isolate V4) (Methylokorus infernorum (strain V4)).